The following is a 160-amino-acid chain: FMRFamide-like neuropeptides 13 (160 aa).

Residues methionine 1–alanine 17 form the signal peptide. The propeptide occupies phenylalanine 18–serine 43. Phenylalanine 60, phenylalanine 73, phenylalanine 85, phenylalanine 98, phenylalanine 110, phenylalanine 123, phenylalanine 135, phenylalanine 146, and phenylalanine 157 each carry phenylalanine amide.

It belongs to the FARP (FMRFamide related peptide) family. Expressed in the ASE sensory neurons, the DD motor neurons, the 15, M3 and M5 cholinergic pharyngeal motoneurons, and the ASG, ASK and BAG neurons.

The protein resides in the secreted. Probable FMRFamide-like neuropeptides. Binds to neuronal receptors such as dmsr-1 to promote sleep in response to cellular stress also known as stress-induced sleep (SIS). Plays a role in behaviors associated with SIS, acting in concert with the FMRFamide related peptide, flp-24 and neuropeptide-like protein nlp-8. Its function is as follows. AADGAPLIRF-amide: Inhibits muscle tension in somatic muscle. Acts as a ligand for the npr-22 receptor in vitro. Acts as a ligand for isoform a of the dmsr-1 G-protein coupled receptor in vitro. In terms of biological role, APEASPFIRF-amide: Inhibits muscle tension in somatic muscle. Potent inhibitor of the activity of the dissected pharyngeal myogenic muscle system. Acts as a ligand for isoform a of the dmsr-1 G-protein coupled receptor in vitro. Functionally, acts as a ligand for the npr-22 receptor in vitro. Acts as a ligand for isoform a of the dmsr-1 G-protein coupled receptor in vitro. Acts as a ligand for isoform a of the dmsr-1 G-protein coupled receptor in vitro. The protein is FMRFamide-like neuropeptides 13 of Caenorhabditis elegans.